The sequence spans 328 residues: Beta-ketoacyl-[acyl-carrier-protein] synthase III 2 (328 aa).

Catalysis depends on residues cysteine 113 and histidine 255. The tract at residues 256–260 is ACP-binding; it reads QANAR. Asparagine 285 is a catalytic residue.

Belongs to the thiolase-like superfamily. FabH family. In terms of assembly, homodimer.

Its subcellular location is the cytoplasm. It catalyses the reaction malonyl-[ACP] + acetyl-CoA + H(+) = 3-oxobutanoyl-[ACP] + CO2 + CoA. It participates in lipid metabolism; fatty acid biosynthesis. Catalyzes the condensation reaction of fatty acid synthesis by the addition to an acyl acceptor of two carbons from malonyl-ACP. Catalyzes the first condensation reaction which initiates fatty acid synthesis and may therefore play a role in governing the total rate of fatty acid production. Possesses both acetoacetyl-ACP synthase and acetyl transacylase activities. Its substrate specificity determines the biosynthesis of branched-chain and/or straight-chain of fatty acids. The sequence is that of Beta-ketoacyl-[acyl-carrier-protein] synthase III 2 from Lactiplantibacillus plantarum (strain ATCC BAA-793 / NCIMB 8826 / WCFS1) (Lactobacillus plantarum).